The following is a 385-amino-acid chain: Isocitrate dehydrogenase [NAD] subunit beta, mitochondrial (385 aa).

Residues 1 to 34 (MAALSGVRWLTRALVSAGNPGAWRGLSTSAAAHA) constitute a mitochondrion transit peptide. Residue Lys-199 is modified to N6-acetyllysine.

Belongs to the isocitrate and isopropylmalate dehydrogenases family. In terms of assembly, heterooligomer of subunits alpha (IDH3A), beta (IDH3B), and gamma (IDH3G) in the apparent ratio of 2:1:1. The heterodimer containing one IDH3A and one IDH3B subunit and the heterodimer containing one IDH3A and one IDH3G subunit assemble into a heterotetramer (which contains two subunits of IDH3A, one of IDH3B and one of IDH3G) and further into the heterooctamer.

It localises to the mitochondrion. Its activity is regulated as follows. The heterotetramer and the heterodimer composed of IDH3A and IDH3G subunits can be allosterically activated by citrate (CIT) or/and ADP, and the two activators can act independently or synergistically. The heterodimer composed of IDH3A and IDH3B subunits cannot be allosterically regulated and the allosteric regulation of the heterotetramer is through the IDH3G subunit and not the IDH3B subunit. The IDH3G subunit contains the allosteric site which consists of a CIT-binding site and an ADP-binding site, and the binding of CIT and ADP causes conformational changes at the allosteric site which are transmitted to the active site in the catalytic subunit (IDH3A) through a cascade of conformational changes at the heterodimer interface, leading to stabilization of the isocitrate-binding at the active site and thus activation of the enzyme. ATP can activate the heterotetramer and the heterodimer composed of IDH3A and IDH3G subunits at low concentrations but inhibits their activities at high concentrations, whereas ATP exhibits only inhibitory effect on the heterodimer composed of IDH3A and IDH3B subunits. Its function is as follows. Plays a structural role to facilitate the assembly and ensure the full activity of the enzyme catalyzing the decarboxylation of isocitrate (ICT) into alpha-ketoglutarate. The heterodimer composed of the alpha (IDH3A) and beta (IDH3B) subunits and the heterodimer composed of the alpha (IDH3A) and gamma (IDH3G) subunits, have considerable basal activity but the full activity of the heterotetramer (containing two subunits of IDH3A, one of IDH3B and one of IDH3G) requires the assembly and cooperative function of both heterodimers. The sequence is that of Isocitrate dehydrogenase [NAD] subunit beta, mitochondrial (IDH3B) from Homo sapiens (Human).